Here is a 121-residue protein sequence, read N- to C-terminus: T cell receptor alpha variable 23/delta variable 6 (121 aa).

A signal peptide spans 1 to 21 (MDKILGASFLVLWLQLCWVSG). An Ig-like domain is found at 30–121 (QQVKQSPQSL…DSATYFCAAS (92 aa)). A disulfide bridge links C51 with C118. An N-linked (GlcNAc...) asparagine glycan is attached at N95.

Alpha-beta TR is a heterodimer composed of an alpha and beta chain; disulfide-linked. The alpha-beta TR is associated with the transmembrane signaling CD3 coreceptor proteins to form the TR-CD3 (TcR or TCR). The assembly of alpha-beta TR heterodimers with CD3 occurs in the endoplasmic reticulum where a single alpha-beta TR heterodimer associates with one CD3D-CD3E heterodimer, one CD3G-CD3E heterodimer and one CD247 homodimer forming a stable octameric structure. CD3D-CD3E and CD3G-CD3E heterodimers preferentially associate with TR alpha and TR beta chains, respectively. The association of the CD247 homodimer is the last step of TcR assembly in the endoplasmic reticulum and is required for transport to the cell surface.

It is found in the cell membrane. In terms of biological role, v region of the variable domain of T cell receptor (TR) alpha chain that participates in the antigen recognition. Alpha-beta T cell receptors are antigen specific receptors which are essential to the immune response and are present on the cell surface of T lymphocytes. Recognize peptide-major histocompatibility (MH) (pMH) complexes that are displayed by antigen presenting cells (APC), a prerequisite for efficient T cell adaptive immunity against pathogens. Binding of alpha-beta TR to pMH complex initiates TR-CD3 clustering on the cell surface and intracellular activation of LCK that phosphorylates the ITAM motifs of CD3G, CD3D, CD3E and CD247 enabling the recruitment of ZAP70. In turn ZAP70 phosphorylates LAT, which recruits numerous signaling molecules to form the LAT signalosome. The LAT signalosome propagates signal branching to three major signaling pathways, the calcium, the mitogen-activated protein kinase (MAPK) kinase and the nuclear factor NF-kappa-B (NF-kB) pathways, leading to the mobilization of transcription factors that are critical for gene expression and essential for T cell growth and differentiation. The T cell repertoire is generated in the thymus, by V-(D)-J rearrangement. This repertoire is then shaped by intrathymic selection events to generate a peripheral T cell pool of self-MH restricted, non-autoaggressive T cells. Post-thymic interaction of alpha-beta TR with the pMH complexes shapes TR structural and functional avidity. This Homo sapiens (Human) protein is T cell receptor alpha variable 23/delta variable 6.